The following is a 335-amino-acid chain: uncharacterized protein (335 aa).

3 Solcar repeats span residues 22–129, 134–227, and 244–327; these read VKPI…LLPL, GFPA…IRLF, and KDLY…TKKY. Transmembrane regions (helical) follow at residues 28–48, 104–123, 133–154, 195–219, 246–263, and 307–323; these read MLSA…LDVV, GLVP…FLGY, WGFP…ATIV, GILN…FYWW, LYIN…ATLL, and CVKV…SYHL.

It belongs to the mitochondrial carrier (TC 2.A.29) family.

It localises to the mitochondrion inner membrane. This is an uncharacterized protein from Schizosaccharomyces pombe (strain 972 / ATCC 24843) (Fission yeast).